The following is a 729-amino-acid chain: Phosphoribosylformylglycinamidine synthase subunit PurL (729 aa).

His-42 is an active-site residue. Residues Tyr-45 and Lys-84 each coordinate ATP. Glu-86 lines the Mg(2+) pocket. Substrate is bound by residues 87-90 (SHNH) and Arg-109. The active-site Proton acceptor is the His-88. Mg(2+) is bound at residue Asp-110. Gln-238 lines the substrate pocket. Asp-266 provides a ligand contact to Mg(2+). 310–312 (ESQ) is a substrate binding site. Residues Asp-492 and Gly-529 each contribute to the ATP site. Asn-530 serves as a coordination point for Mg(2+). Ser-532 provides a ligand contact to substrate.

It belongs to the FGAMS family. As to quaternary structure, monomer. Part of the FGAM synthase complex composed of 1 PurL, 1 PurQ and 2 PurS subunits.

It is found in the cytoplasm. The catalysed reaction is N(2)-formyl-N(1)-(5-phospho-beta-D-ribosyl)glycinamide + L-glutamine + ATP + H2O = 2-formamido-N(1)-(5-O-phospho-beta-D-ribosyl)acetamidine + L-glutamate + ADP + phosphate + H(+). The protein operates within purine metabolism; IMP biosynthesis via de novo pathway; 5-amino-1-(5-phospho-D-ribosyl)imidazole from N(2)-formyl-N(1)-(5-phospho-D-ribosyl)glycinamide: step 1/2. In terms of biological role, part of the phosphoribosylformylglycinamidine synthase complex involved in the purines biosynthetic pathway. Catalyzes the ATP-dependent conversion of formylglycinamide ribonucleotide (FGAR) and glutamine to yield formylglycinamidine ribonucleotide (FGAM) and glutamate. The FGAM synthase complex is composed of three subunits. PurQ produces an ammonia molecule by converting glutamine to glutamate. PurL transfers the ammonia molecule to FGAR to form FGAM in an ATP-dependent manner. PurS interacts with PurQ and PurL and is thought to assist in the transfer of the ammonia molecule from PurQ to PurL. In Campylobacter curvus (strain 525.92), this protein is Phosphoribosylformylglycinamidine synthase subunit PurL.